The following is a 160-amino-acid chain: MAVTKKPDLSDPVLRAKLAKGMGHNYYGEPAWPNDLLYIFPVVIFGTFACVIGLSVLDPAAIGEPANPFATPLEILPEWYFYPVFQILRVVPNKLLGVLLMAAVPAGLLTVPFIENINKFQNPFRRPVATTVFLIGTVAAIWLGIGAALPIDISLTLGLF.

The next 3 membrane-spanning stretches (helical) occupy residues 36 to 56, 95 to 115, and 131 to 151; these read LLYI…GLSV, LLGV…PFIE, and TVFL…ALPI.

Belongs to the cytochrome b family. PetD subfamily. As to quaternary structure, the 4 large subunits of the cytochrome b6-f complex are cytochrome b6, subunit IV (17 kDa polypeptide, petD), cytochrome f and the Rieske protein, while the 4 small subunits are petG, petL, petM and petN. The complex functions as a dimer.

It is found in the plastid. The protein localises to the chloroplast thylakoid membrane. Functionally, component of the cytochrome b6-f complex, which mediates electron transfer between photosystem II (PSII) and photosystem I (PSI), cyclic electron flow around PSI, and state transitions. This chain is Cytochrome b6-f complex subunit 4, found in Chlorella vulgaris (Green alga).